A 604-amino-acid polypeptide reads, in one-letter code: Deuterosome assembly protein 1 (604 aa).

4 coiled-coil regions span residues 14–59 (CEAE…NAQT), 85–197 (MTQN…GKKQ), 226–278 (IIEK…ELQS), and 336–399 (QDQP…KQLK). Ser547 is modified (phosphoserine). A coiled-coil region spans residues 558-601 (AAQHFLLEEEKRAKELEKLLNTHIDELQRHTEFTLNKYSKLKQN).

Belongs to the CEP63 family. Interacts with CEP152; the interaction is mutually exclusive with CEP63.

It localises to the cytoplasm. Functionally, key structural component of the deuterosome, a structure that promotes de novo centriole amplification in multiciliated cells. Deuterosome-mediated centriole amplification occurs in terminally differentiated multiciliated cells and can generate more than 100 centrioles. Probably sufficient for the specification and formation of the deuterosome inner core. Interacts with CEP152 and recruits PLK4 to activate centriole biogenesis. The polypeptide is Deuterosome assembly protein 1 (Homo sapiens (Human)).